A 471-amino-acid polypeptide reads, in one-letter code: Uronate isomerase (471 aa).

The protein belongs to the metallo-dependent hydrolases superfamily. Uronate isomerase family.

It carries out the reaction D-glucuronate = D-fructuronate. The catalysed reaction is aldehydo-D-galacturonate = keto-D-tagaturonate. It participates in carbohydrate metabolism; pentose and glucuronate interconversion. In Cellvibrio japonicus (strain Ueda107) (Pseudomonas fluorescens subsp. cellulosa), this protein is Uronate isomerase.